Reading from the N-terminus, the 151-residue chain is Metallothiol transferase FosB (151 aa).

The VOC domain occupies 4–119; the sequence is SINHVTYSVS…DGHKFELHTG (116 aa). 3 residues coordinate Mg(2+): H7, H66, and E115. E115 functions as the Proton donor/acceptor in the catalytic mechanism.

This sequence belongs to the fosfomycin resistance protein family. FosB subfamily. Homodimer. The cofactor is Mg(2+).

The protein resides in the cytoplasm. Functionally, metallothiol transferase which confers resistance to fosfomycin by catalyzing the addition of a thiol cofactor to fosfomycin. L-cysteine is probably the physiological thiol donor. The polypeptide is Metallothiol transferase FosB (Staphylococcus saprophyticus subsp. saprophyticus (strain ATCC 15305 / DSM 20229 / NCIMB 8711 / NCTC 7292 / S-41)).